A 294-amino-acid chain; its full sequence is 4-hydroxy-tetrahydrodipicolinate synthase (294 aa).

Thr47 is a binding site for pyruvate. The Proton donor/acceptor role is filled by Tyr135. Lys163 (schiff-base intermediate with substrate) is an active-site residue. Thr205 serves as a coordination point for pyruvate.

This sequence belongs to the DapA family. Homotetramer; dimer of dimers.

It localises to the cytoplasm. The catalysed reaction is L-aspartate 4-semialdehyde + pyruvate = (2S,4S)-4-hydroxy-2,3,4,5-tetrahydrodipicolinate + H2O + H(+). Its pathway is amino-acid biosynthesis; L-lysine biosynthesis via DAP pathway; (S)-tetrahydrodipicolinate from L-aspartate: step 3/4. Functionally, catalyzes the condensation of (S)-aspartate-beta-semialdehyde [(S)-ASA] and pyruvate to 4-hydroxy-tetrahydrodipicolinate (HTPA). The polypeptide is 4-hydroxy-tetrahydrodipicolinate synthase (Rickettsia rickettsii).